A 769-amino-acid polypeptide reads, in one-letter code: Glutathione biosynthesis bifunctional protein GshAB (769 aa).

A glutamate--cysteine ligase region spans residues 1-347; that stretch reads MLDSFKENEA…QLADENENNI (347 aa). Residues 514–768 form the ATP-grasp domain; the sequence is KLVLAEHGIR…IGDKILDFLF (255 aa). Residue 541-599 participates in ATP binding; that stretch reads SLFEDKQIVVKPKSTNYGWGISIFKNKFTLEDYQEALNIAFSYDSSVIIEEFIPGDEFR. Mg(2+)-binding residues include Asp721, Glu738, and Asn740. Asp721, Glu738, and Asn740 together coordinate Mn(2+).

In the N-terminal section; belongs to the glutamate--cysteine ligase type 1 family. Type 2 subfamily. As to quaternary structure, monomer. It depends on Mg(2+) as a cofactor. Mn(2+) is required as a cofactor.

The enzyme catalyses L-cysteine + L-glutamate + ATP = gamma-L-glutamyl-L-cysteine + ADP + phosphate + H(+). It carries out the reaction gamma-L-glutamyl-L-cysteine + glycine + ATP = glutathione + ADP + phosphate + H(+). It participates in sulfur metabolism; glutathione biosynthesis; glutathione from L-cysteine and L-glutamate: step 1/2. The protein operates within sulfur metabolism; glutathione biosynthesis; glutathione from L-cysteine and L-glutamate: step 2/2. Functionally, synthesizes glutathione from L-glutamate and L-cysteine via gamma-L-glutamyl-L-cysteine. The protein is Glutathione biosynthesis bifunctional protein GshAB of Listeria innocua serovar 6a (strain ATCC BAA-680 / CLIP 11262).